Reading from the N-terminus, the 80-residue chain is U19-lycotoxin-Ls1a (80 aa).

An N-terminal signal peptide occupies residues 1-22 (MSPKVQALIFIVGLITLLAAHA). Positions 23–34 (QEELSDNIESER) are excised as a propeptide. Disulfide bonds link Cys36/Cys50, Cys43/Cys55, Cys49/Cys66, and Cys57/Cys64.

The protein belongs to the neurotoxin 02 (plectoxin) family. 05 (U19-lycotoxin) subfamily. In terms of tissue distribution, expressed by the venom gland.

The protein localises to the secreted. The sequence is that of U19-lycotoxin-Ls1a from Lycosa singoriensis (Wolf spider).